The sequence spans 206 residues: Probable nicotinate-nucleotide adenylyltransferase (206 aa).

This sequence belongs to the NadD family.

The enzyme catalyses nicotinate beta-D-ribonucleotide + ATP + H(+) = deamido-NAD(+) + diphosphate. Its pathway is cofactor biosynthesis; NAD(+) biosynthesis; deamido-NAD(+) from nicotinate D-ribonucleotide: step 1/1. Its function is as follows. Catalyzes the reversible adenylation of nicotinate mononucleotide (NaMN) to nicotinic acid adenine dinucleotide (NaAD). The chain is Probable nicotinate-nucleotide adenylyltransferase from Gloeobacter violaceus (strain ATCC 29082 / PCC 7421).